The chain runs to 318 residues: GTP cyclohydrolase MptA (318 aa).

This sequence belongs to the GTP cyclohydrolase IV family. In terms of assembly, homodimer. The cofactor is Fe(2+).

It catalyses the reaction GTP + H2O = 7,8-dihydroneopterin 2',3'-cyclic phosphate + formate + diphosphate + H(+). The protein operates within cofactor biosynthesis; 5,6,7,8-tetrahydromethanopterin biosynthesis. In terms of biological role, converts GTP to 7,8-dihydro-D-neopterin 2',3'-cyclic phosphate, the first intermediate in the biosynthesis of coenzyme methanopterin. The chain is GTP cyclohydrolase MptA from Methanosarcina acetivorans (strain ATCC 35395 / DSM 2834 / JCM 12185 / C2A).